The following is a 534-amino-acid chain: CTP synthase (534 aa).

Positions 1–268 (MSVKYIFVTG…AKIVCKRLGL (268 aa)) are amidoligase domain. CTP is bound at residue Ser-14. Ser-14 contributes to the UTP binding site. Residue 15-20 (GLGKGI) coordinates ATP. Tyr-55 contacts L-glutamine. Asp-72 provides a ligand contact to ATP. Asp-72 and Glu-142 together coordinate Mg(2+). CTP contacts are provided by residues 149–151 (DIE), 189–194 (KTKPTQ), and Lys-225. Residues 189–194 (KTKPTQ) and Lys-225 each bind UTP. The Glutamine amidotransferase type-1 domain occupies 293–534 (TIGLVGKYVE…VRAAYEYKTK (242 aa)). Gly-355 contacts L-glutamine. Cys-382 functions as the Nucleophile; for glutamine hydrolysis in the catalytic mechanism. L-glutamine contacts are provided by residues 383–386 (LGMQ), Glu-406, and Arg-462. Catalysis depends on residues His-507 and Glu-509.

This sequence belongs to the CTP synthase family. As to quaternary structure, homotetramer.

It carries out the reaction UTP + L-glutamine + ATP + H2O = CTP + L-glutamate + ADP + phosphate + 2 H(+). The enzyme catalyses L-glutamine + H2O = L-glutamate + NH4(+). The catalysed reaction is UTP + NH4(+) + ATP = CTP + ADP + phosphate + 2 H(+). It functions in the pathway pyrimidine metabolism; CTP biosynthesis via de novo pathway; CTP from UDP: step 2/2. Allosterically activated by GTP, when glutamine is the substrate; GTP has no effect on the reaction when ammonia is the substrate. The allosteric effector GTP functions by stabilizing the protein conformation that binds the tetrahedral intermediate(s) formed during glutamine hydrolysis. Inhibited by the product CTP, via allosteric rather than competitive inhibition. Functionally, catalyzes the ATP-dependent amination of UTP to CTP with either L-glutamine or ammonia as the source of nitrogen. Regulates intracellular CTP levels through interactions with the four ribonucleotide triphosphates. The chain is CTP synthase from Ruminiclostridium cellulolyticum (strain ATCC 35319 / DSM 5812 / JCM 6584 / H10) (Clostridium cellulolyticum).